A 356-amino-acid polypeptide reads, in one-letter code: UDP-N-acetylglucosamine--N-acetylmuramyl-(pentapeptide) pyrophosphoryl-undecaprenol N-acetylglucosamine transferase (356 aa).

UDP-N-acetyl-alpha-D-glucosamine-binding positions include 12-14, Asn124, Arg163, Ser188, Ile242, 261-266, and Gln287; these read TGG and ALTVSE.

The protein belongs to the glycosyltransferase 28 family. MurG subfamily.

It localises to the cell inner membrane. The enzyme catalyses di-trans,octa-cis-undecaprenyl diphospho-N-acetyl-alpha-D-muramoyl-L-alanyl-D-glutamyl-meso-2,6-diaminopimeloyl-D-alanyl-D-alanine + UDP-N-acetyl-alpha-D-glucosamine = di-trans,octa-cis-undecaprenyl diphospho-[N-acetyl-alpha-D-glucosaminyl-(1-&gt;4)]-N-acetyl-alpha-D-muramoyl-L-alanyl-D-glutamyl-meso-2,6-diaminopimeloyl-D-alanyl-D-alanine + UDP + H(+). It functions in the pathway cell wall biogenesis; peptidoglycan biosynthesis. Functionally, cell wall formation. Catalyzes the transfer of a GlcNAc subunit on undecaprenyl-pyrophosphoryl-MurNAc-pentapeptide (lipid intermediate I) to form undecaprenyl-pyrophosphoryl-MurNAc-(pentapeptide)GlcNAc (lipid intermediate II). The polypeptide is UDP-N-acetylglucosamine--N-acetylmuramyl-(pentapeptide) pyrophosphoryl-undecaprenol N-acetylglucosamine transferase (Ectopseudomonas mendocina (strain ymp) (Pseudomonas mendocina)).